Here is a 377-residue protein sequence, read N- to C-terminus: Flap endonuclease 1 (377 aa).

Positions Met1–Arg105 are N-domain. Asp34 lines the Mg(2+) pocket. The DNA site is built by Arg47 and Arg71. Asp87 provides a ligand contact to Mg(2+). The segment at Ser99 to Ala119 is disordered. Residues Glu120 to Tyr251 are I-domain. Positions 156, 158, 177, and 179 each coordinate Mg(2+). Residue Glu156 participates in DNA binding. DNA is bound by residues Gly229 and Asp231. Asp231 serves as a coordination point for Mg(2+). Residues Val338–Phe346 form an interaction with PCNA region.

This sequence belongs to the XPG/RAD2 endonuclease family. FEN1 subfamily. As to quaternary structure, interacts with PCNA. Three molecules of FEN1 bind to one PCNA trimer with each molecule binding to one PCNA monomer. PCNA stimulates the nuclease activity without altering cleavage specificity. It depends on Mg(2+) as a cofactor. Post-translationally, phosphorylated. Phosphorylation upon DNA damage induces relocalization to the nuclear plasma.

The protein localises to the nucleus. It is found in the nucleolus. It localises to the nucleoplasm. The protein resides in the mitochondrion. Functionally, structure-specific nuclease with 5'-flap endonuclease and 5'-3' exonuclease activities involved in DNA replication and repair. During DNA replication, cleaves the 5'-overhanging flap structure that is generated by displacement synthesis when DNA polymerase encounters the 5'-end of a downstream Okazaki fragment. It enters the flap from the 5'-end and then tracks to cleave the flap base, leaving a nick for ligation. Also involved in the long patch base excision repair (LP-BER) pathway, by cleaving within the apurinic/apyrimidinic (AP) site-terminated flap. Acts as a genome stabilization factor that prevents flaps from equilibrating into structures that lead to duplications and deletions. Also possesses 5'-3' exonuclease activity on nicked or gapped double-stranded DNA, and exhibits RNase H activity. Also involved in replication and repair of rDNA and in repairing mitochondrial DNA. The chain is Flap endonuclease 1 from Vanderwaltozyma polyspora (strain ATCC 22028 / DSM 70294 / BCRC 21397 / CBS 2163 / NBRC 10782 / NRRL Y-8283 / UCD 57-17) (Kluyveromyces polysporus).